A 108-amino-acid chain; its full sequence is UPF0060 membrane protein Sputw3181_1172 (108 aa).

4 consecutive transmembrane segments (helical) span residues 3–23, 31–51, 63–83, and 87–107; these read VITTLGLFIITAIAEIVGCYL, GASAWVLLPAAISLALFAWLL, AAYGGVYVTIAIVWLWGVDGI, and RWDLAGVVLMLAGMAVIMFAP.

It belongs to the UPF0060 family.

The protein resides in the cell inner membrane. The sequence is that of UPF0060 membrane protein Sputw3181_1172 from Shewanella sp. (strain W3-18-1).